Here is a 100-residue protein sequence, read N- to C-terminus: MYB-like transcription factor TCL2 (100 aa).

Positions Thr37 to Trp74 constitute a Myb-like domain.

In terms of assembly, interacts with GL3. In terms of tissue distribution, expressed in cotyledons, petioles, rosette leaves, hydathodes, cauline leaves, stems, pedicels and flower buds.

The protein localises to the nucleus. Functionally, MYB-type transcription factor involved in trichome cell specification. Acts as a negative regulator of trichome patterning and formation. May function by suppressing the expression of GL3. In Arabidopsis thaliana (Mouse-ear cress), this protein is MYB-like transcription factor TCL2 (TCL2).